The sequence spans 366 residues: Protein lifeguard 1 (366 aa).

A disordered region spans residues 1 to 141 (MSHEKSFLVS…GPPSYYDNQD (141 aa)). 2 stretches are compositionally biased toward pro residues: residues 14 to 44 (YPPP…PFQP) and 67 to 109 (GPYP…PNPY). The next 7 helical transmembrane spans lie at 160–180 (VFLV…VFTF), 192–212 (VWTY…LSCC), 223–243 (LVAL…IASF), 248–268 (AVIM…IFSM), 278–298 (VGVL…CIFI), 302–322 (VLEI…LAVD), and 341–361 (FAAL…LTII).

This sequence belongs to the BI1 family. LFG subfamily.

The protein resides in the membrane. Its function is as follows. Potential apoptotic regulator. The sequence is that of Protein lifeguard 1 (GRINA) from Bos taurus (Bovine).